Reading from the N-terminus, the 101-residue chain is Anti-lipopolysaccharide factor (101 aa).

Cys-31 and Cys-52 are disulfide-bonded.

Functionally, binds tightly to LPS and thus specifically inhibits the LPS-mediated activation of the hemolymph coagulation. It has a strong antibacterial effect especially on the growth of Gram-negative bacteria. This Limulus polyphemus (Atlantic horseshoe crab) protein is Anti-lipopolysaccharide factor.